An 84-amino-acid polypeptide reads, in one-letter code: Cell division topological specificity factor (84 aa).

The protein belongs to the MinE family.

Prevents the cell division inhibition by proteins MinC and MinD at internal division sites while permitting inhibition at polar sites. This ensures cell division at the proper site by restricting the formation of a division septum at the midpoint of the long axis of the cell. This Granulibacter bethesdensis (strain ATCC BAA-1260 / CGDNIH1) protein is Cell division topological specificity factor.